The primary structure comprises 483 residues: MSKNEIKLQMEYASSYETWLEAAEKLDVIEGKYQWREQKESDEYDYVLVESRLHELRRHRLSKNTRLLLGLLRNSVARDFANMDNSRLYNYAHSGTKKLIDEFIQEVLMCLTYLEETPDLSLDEKITEFSRLKLTTGNTALILSGGGTFGMTHIGVLQSLHEQGLVPKIICGSSAGAIVACAAAVRNKEEQEILLRQFHTGDLSVFTDPNAAPPSVIQSVKQYFTRGCVLDISHLERVMKLLIGDFTFQEAYDRSGYILNVTVSCGSLFEMPSLLNYITAPNVLVWSAVVATCSVPFLFKRATLWERDPLTREVSAFCVTDAPLWMDGSVDNDIPHAKLTELFHVNHFIVSQVNFHIVPFIMDPTSHNWVERCCKKAIDLAAQEVSLTFRLFAELGIFSVLFTKLQSVITQKYSGDITIIPRLNYREVNKVIKNPTPSFLLDAATRGKRGTWTKVPVTRNHCAIEILIAAAYTRLIKRSKSLK.

The PNPLA domain maps to 141-340 (LILSGGGTFG…DNDIPHAKLT (200 aa)). The GXGXXG motif lies at 145 to 150 (GGGTFG). The short motif at 172-176 (GSSAG) is the GXSXG element. The active-site Nucleophile is the Ser-174. The active-site Proton acceptor is Asp-327.

The protein localises to the cytoplasm. It is found in the lipid droplet. The enzyme catalyses a triacylglycerol + H2O = a diacylglycerol + a fatty acid + H(+). Lipid particle-localized triacylglycerol (TAG) lipase. The lipid droplet/particle is a lipid storage compartment which serves as a depot of energy and building blocks for membrane lipid biosynthesis. Involved in the mobilization of the non-polar storage lipids triacylglycerols (TAGs) from lipid particles by hydrolysis of TAGs, releasing and supplying specific fatty acids to the appropriate metabolic pathways. The polypeptide is Triacylglycerol lipase ptl3 (ptl3) (Schizosaccharomyces pombe (strain 972 / ATCC 24843) (Fission yeast)).